We begin with the raw amino-acid sequence, 101 residues long: Large ribosomal subunit protein uL23 (101 aa).

Belongs to the universal ribosomal protein uL23 family. As to quaternary structure, part of the 50S ribosomal subunit. Contacts protein L29, and trigger factor when it is bound to the ribosome.

One of the early assembly proteins it binds 23S rRNA. One of the proteins that surrounds the polypeptide exit tunnel on the outside of the ribosome. Forms the main docking site for trigger factor binding to the ribosome. The chain is Large ribosomal subunit protein uL23 from Corynebacterium glutamicum (strain R).